A 425-amino-acid polypeptide reads, in one-letter code: MAGYVVVGTQWGDEGKGKIIDVLSEKADYVVRFQGGNNAGHTVVVNGEKFILQLLPSGVLQAGTCVIGPGVVVDPKVFLDEIDRIEKRGAKTDHVIISDRAHVIMPYHIEMDKIRESVEDRIKIGTTKKGIGPCYADKIARDGIRMSDLLDLKQFEEKLRANLKEKNEIFTKIYGLEPLDFDKIFEEYKGYIEKIKHRIVDTIPIVNKALDENKLVLFEGAQAMMLDINYGTYPYVTSSSPTLGGVTTGAGVSPRKINKGIGVMKAYTTRVGEGPFVTEIKGEFGDKIKGIGGEYGAVTGRPRRCGWLDLVVGRYATEINGLTDIVITKIDVLSGLGKLKICTAYEIDGKVYDYVPADTKSLDKAIPIYEELDGWDEDITQIKKYEDLPVNCRKYLERVQEILACPISVVSVGPDRSQNIHIREI.

GTP is bound by residues 12-18 (GDEGKGK) and 40-42 (GHT). Aspartate 13 (proton acceptor) is an active-site residue. Residues aspartate 13 and glycine 40 each contribute to the Mg(2+) site. IMP-binding positions include 13 to 16 (DEGK), 38 to 41 (NAGH), threonine 127, arginine 141, glutamine 222, threonine 237, and arginine 301. Catalysis depends on histidine 41, which acts as the Proton donor. 297-303 (AVTGRPR) contributes to the substrate binding site. GTP-binding positions include arginine 303, 329–331 (KID), and 411–413 (SVG).

Belongs to the adenylosuccinate synthetase family. In terms of assembly, homodimer. It depends on Mg(2+) as a cofactor.

The protein resides in the cytoplasm. It carries out the reaction IMP + L-aspartate + GTP = N(6)-(1,2-dicarboxyethyl)-AMP + GDP + phosphate + 2 H(+). Its pathway is purine metabolism; AMP biosynthesis via de novo pathway; AMP from IMP: step 1/2. Functionally, plays an important role in the de novo pathway of purine nucleotide biosynthesis. Catalyzes the first committed step in the biosynthesis of AMP from IMP. The polypeptide is Adenylosuccinate synthetase (Fusobacterium nucleatum).